Consider the following 367-residue polypeptide: Protein RIC-3 (367 aa).

An N-terminal signal peptide occupies residues 1-31; it reads MAYSTVQRVALASGLVLAVSLLLPKAFLSRG. The segment at 30–67 is disordered; the sequence is RGKRPEPPPGPEGKLDRFPPMMHHHSAPSDGQTPGARF. Topologically, residues 32-95 are lumenal; it reads KRPEPPPGPE…AGGGGSGRGL (64 aa). Residues 96–116 traverse the membrane as a helical segment; the sequence is MGQIIPIYGFGIFLYILYILF. Residues 117–367 are Cytoplasmic-facing; that stretch reads KLSKGKTAED…LRKRNPQGFE (251 aa). A coiled-coil region spans residues 138–169; it reads HRKITNFELVQLQEKLKETEEAMEKLINRVGP. Position 201 is an N6-acetyllysine; alternate (lysine 201). A Glycyl lysine isopeptide (Lys-Gly) (interchain with G-Cter in ubiquitin); alternate cross-link involves residue lysine 201. Disordered regions lie at residues 262-301 and 322-367; these read QMGE…PESC and ADGY…QGFE. Positions 271-280 are enriched in basic and acidic residues; sequence SERLSWDHLP. Residues 358–367 are compositionally biased toward basic residues; it reads LRKRNPQGFE.

The protein belongs to the ric-3 family. In terms of assembly, monomer and homodimer. Interacts with CHRNA7, CHRNA3, CHRNA4, CHRNB2, CHRNB4 and HTR3A. As to expression, expressed in brain, with highest levels in hippocampus, cerebellum and superior colliculus.

The protein localises to the endoplasmic reticulum membrane. In terms of biological role, molecular chaperone which promotes the proper subunit assembly and surface trafficking of alpha-7 (CHRNA7) nicotinic acetylcholine receptor. Promotes the proper subunit assembly and cell surface expression of alpha-8 (CHRNA8) nicotinic acetylcholine receptor. May also promote functional expression of homomeric serotoninergic 5-HT3 receptors, and of heteromeric acetylcholine receptors alpha-3/beta-2, alpha-3/beta-4, alpha-4/beta-2 and alpha-4/beta-4. This Mus musculus (Mouse) protein is Protein RIC-3 (Ric3).